A 268-amino-acid polypeptide reads, in one-letter code: uncharacterized protein (268 aa).

Residues 150-172 (LYSIADFLAYTFTYFYLATVGLA) traverse the membrane as a helical segment.

It localises to the host membrane. This is an uncharacterized protein from Sulfolobus islandicus rod-shaped virus 1 (SIRV-1).